A 510-amino-acid polypeptide reads, in one-letter code: Acyl-CoA desaturase 1 (510 aa).

At 1–112 (MPTSGTTIEL…TLNNWHQHLN (112 aa)) the chain is on the cytoplasmic side. A helical membrane pass occupies residues 113–133 (WLNMVLVCGMPMIGWYFALSG). Residues 134-138 (KVPLH) lie on the Lumenal side of the membrane. Residues 139–159 (LNVFLFSVFYYAVGGVSITAG) traverse the membrane as a helical segment. The Cytoplasmic segment spans residues 160-255 (YHRLWSHRSY…DWTIRFQHRH (96 aa)). Residues His-161, His-166, His-198, His-201, and His-202 each contribute to the Fe cation site. The Histidine box-1 signature appears at 161–166 (HRLWSH). The Histidine box-2 signature appears at 198-202 (HRIHH). Residues 256-276 (YILLMLLTAFVIPTLICGYFF) form a helical membrane-spanning segment. The Lumenal segment spans residues 277 to 280 (NDYM). Residues 281–301 (GGLIYAGFIRVFVIQQATFCI) form a helical membrane-spanning segment. The Cytoplasmic segment spans residues 302-510 (NSLAHYIGTQ…GEIYETGKFF (209 aa)). 4 residues coordinate Fe cation: His-306, His-335, His-338, and His-339. Positions 335-339 (HNFHH) match the Histidine box-3 motif. The region spanning 409-487 (LPMWDKQTFL…LADMRVAVIK (79 aa)) is the Cytochrome b5 heme-binding domain. 2 residues coordinate heme: His-444 and His-470.

The protein belongs to the fatty acid desaturase type 1 family. Fe(2+) is required as a cofactor.

It localises to the endoplasmic reticulum membrane. The enzyme catalyses octadecanoyl-CoA + 2 Fe(II)-[cytochrome b5] + O2 + 2 H(+) = (9Z)-octadecenoyl-CoA + 2 Fe(III)-[cytochrome b5] + 2 H2O. It carries out the reaction hexadecanoyl-CoA + 2 Fe(II)-[cytochrome b5] + O2 + 2 H(+) = (9Z)-hexadecenoyl-CoA + 2 Fe(III)-[cytochrome b5] + 2 H2O. Its function is as follows. Stearoyl-CoA desaturase that utilizes O(2) and electrons from reduced cytochrome b5 to introduce the first double bond into saturated fatty acyl-CoA substrates. Catalyzes the insertion of a cis double bond at the delta-9 position into fatty acyl-CoA substrates including palmitoyl-CoA and stearoyl-CoA. Required for the biosynthesis of membrane phospholipids, cholesterol esters and triglycerides. Regulates fatty acid desaturation, that is, the ratio of unsaturated versus saturated fatty acyl chains, by competing with the acyltransferase STC1 for the common substrate C16:0-CoA. SCT1 sequesters C16:0-CoA into lipids, thereby shielding it from desaturation by OLE1. The sequence is that of Acyl-CoA desaturase 1 (OLE1) from Saccharomyces cerevisiae (strain ATCC 204508 / S288c) (Baker's yeast).